A 49-amino-acid polypeptide reads, in one-letter code: GVPCLCDSDGPRPRGNTLSGILWFYPSGCPSGWHNCKAHGPNIGWCCKK.

A well-structured region region spans residues 1–7; the sequence is GVPCLCD. 3 disulfides stabilise this stretch: Cys-4/Cys-46, Cys-6/Cys-36, and Cys-29/Cys-47. The segment at 8 to 17 is arg-14 loop (non-well-structured region); it reads SDGPRPRGNT. The interval 18-49 is well-structured region; sequence LSGILWFYPSGCPSGWHNCKAHGPNIGWCCKK.

It belongs to the sea anemone sodium channel inhibitory toxin family. Type I subfamily.

The protein resides in the secreted. Its subcellular location is the nematocyst. Binds specifically to voltage-gated sodium channels (Nav) (site 3), thereby delaying their inactivation. This toxin has the highest affinity of all anemone toxins for the mammalian sodium channel, whereas its paralog Anthopleurin-A retains the greatest capacity to discriminate between cardiac (Nav1.5/SCN5A) and neuronal sodium channels. When tested electrophysiologically, this toxin exhibits a high affinity for multiple sodium channels with a 50-fold preference for rat cardiac (Nav1.5/SCN5A) over neuronal channels (0.1 nM versus 5 nM). When tested by ion flux, the affinities are similar and appear to have higher affinity (9 nM versus 22 nM). The residue Lys-37 of this toxin has been shown to interact with channel Nav1.5 (residue Asp-1612 in rat and Asp-1610 in human), which is located in the DIV S3-S4 linker (corresponding to channel site 3). Selectively modifies sodium channel inactivation from the open state with little effect on channel activation or on inactivation from closed states. Does not display phospholipid-binding activities, suggesting that the domain IV S3-S4 linker is located at the extracellular surface and not buried in the phospholipid bilayer. The polypeptide is Delta-actitoxin-Axm1b (Anthopleura xanthogrammica (Giant green sea anemone)).